Reading from the N-terminus, the 395-residue chain is Methylmalonyl-CoA decarboxylase subunit beta (395 aa).

9 consecutive transmembrane segments (helical) span residues Leu-17–Ala-37, Leu-43–Met-63, Gly-103–Ile-123, Ser-128–Ala-148, Pro-180–Ile-200, Ile-230–Leu-250, Ile-278–Phe-298, Leu-304–Leu-324, and Gly-374–Phe-394.

The protein belongs to the GcdB/MmdB/OadB family. As to quaternary structure, the methylmalonyl-CoA decarboxylase is composed of four subunits: the carboxyltransferase alpha subunit (MmdA), the tunnel beta subunit (MmdB), the biotin-containing gamma subunit (MmdC) and the delta subunit (MmdD). In terms of processing, the N-terminus is blocked.

The protein localises to the cell membrane. It carries out the reaction (S)-methylmalonyl-CoA + Na(+)(in) + H(+)(out) = propanoyl-CoA + Na(+)(out) + CO2. Functionally, tunnel subunit of the sodium ion pump methylmalonyl-CoA decarboxylase, which converts the chemical energy of a decarboxylation reaction into an electrochemical gradient of Na(+) ions across the cytoplasmic membrane, thereby creating a sodium ion motive force that is used for ATP synthesis. The beta subunit catalyzes the decarboxylation of the carboxybiotin carrier protein and the coupled export of Na(+) ions. This chain is Methylmalonyl-CoA decarboxylase subunit beta, found in Propionigenium modestum.